A 478-amino-acid chain; its full sequence is Glycogen synthase (478 aa).

Lysine 20 contacts ADP-alpha-D-glucose.

It belongs to the glycosyltransferase 1 family. Bacterial/plant glycogen synthase subfamily.

The enzyme catalyses [(1-&gt;4)-alpha-D-glucosyl](n) + ADP-alpha-D-glucose = [(1-&gt;4)-alpha-D-glucosyl](n+1) + ADP + H(+). It participates in glycan biosynthesis; glycogen biosynthesis. Its function is as follows. Synthesizes alpha-1,4-glucan chains using ADP-glucose. This chain is Glycogen synthase, found in Cereibacter sphaeroides (strain ATCC 17023 / DSM 158 / JCM 6121 / CCUG 31486 / LMG 2827 / NBRC 12203 / NCIMB 8253 / ATH 2.4.1.) (Rhodobacter sphaeroides).